The sequence spans 290 residues: Ribosomal RNA small subunit methyltransferase A (290 aa).

6 residues coordinate S-adenosyl-L-methionine: asparagine 27, leucine 29, glycine 54, glutamate 75, aspartate 100, and asparagine 125.

This sequence belongs to the class I-like SAM-binding methyltransferase superfamily. rRNA adenine N(6)-methyltransferase family. RsmA subfamily.

It is found in the cytoplasm. It catalyses the reaction adenosine(1518)/adenosine(1519) in 16S rRNA + 4 S-adenosyl-L-methionine = N(6)-dimethyladenosine(1518)/N(6)-dimethyladenosine(1519) in 16S rRNA + 4 S-adenosyl-L-homocysteine + 4 H(+). Specifically dimethylates two adjacent adenosines (A1518 and A1519) in the loop of a conserved hairpin near the 3'-end of 16S rRNA in the 30S particle. May play a critical role in biogenesis of 30S subunits. In Streptococcus pneumoniae (strain CGSP14), this protein is Ribosomal RNA small subunit methyltransferase A.